The following is a 678-amino-acid chain: NADPH--cytochrome P450 reductase (678 aa).

G2 bears the N-acetylglycine mark. Residues 2-22 (GDSHEDTSATVPEAVAEEVSL) are Lumenal-facing. The chain crosses the membrane as a helical span at residues 23–43 (FSTTDIVLFSLIVGVLTYWFI). The Cytoplasmic portion of the chain corresponds to 44–678 (FKKKKEEIPE…KGRYSLDVWS (635 aa)). The 145-residue stretch at 80–224 (IIVFYGSQTG…DFITWREQFW (145 aa)) folds into the Flavodoxin-like domain. Residues 86 to 91 (SQTGTA), 138 to 141 (ATYG), 173 to 182 (LGNKTYEHFN), and D208 each bind FMN. Residues 279 to 521 (KNPFLAAVTT…FVRKSQFRLP (243 aa)) form the FAD-binding FR-type domain. An NADP(+)-binding site is contributed by R298. Residues R424, 454 to 457 (RYYS), 472 to 474 (CAV), Y478, and 488 to 491 (GVAT) each bind FAD. NADP(+) is bound by residues T535, 596–597 (SR), 602–606 (KVYVQ), and D639. FAD is bound at residue W677.

Belongs to the NADPH--cytochrome P450 reductase family. This sequence in the N-terminal section; belongs to the flavodoxin family. It in the C-terminal section; belongs to the flavoprotein pyridine nucleotide cytochrome reductase family. It depends on FAD as a cofactor. Requires FMN as cofactor.

The protein resides in the endoplasmic reticulum membrane. The catalysed reaction is 2 oxidized [cytochrome P450] + NADPH = 2 reduced [cytochrome P450] + NADP(+) + H(+). This enzyme is required for electron transfer from NADP to cytochrome P450 in microsomes. It can also provide electron transfer to heme oxygenase and cytochrome B5. The chain is NADPH--cytochrome P450 reductase from Mus musculus (Mouse).